A 365-amino-acid chain; its full sequence is 2-aminoethylphosphonate--pyruvate transaminase (365 aa).

The residue at position 194 (lysine 194) is an N6-(pyridoxal phosphate)lysine.

It belongs to the class-V pyridoxal-phosphate-dependent aminotransferase family. PhnW subfamily. Homodimer. Pyridoxal 5'-phosphate is required as a cofactor.

The catalysed reaction is (2-aminoethyl)phosphonate + pyruvate = phosphonoacetaldehyde + L-alanine. Functionally, involved in phosphonate degradation. In Bacillus cereus (strain ZK / E33L), this protein is 2-aminoethylphosphonate--pyruvate transaminase.